Reading from the N-terminus, the 169-residue chain is Probable phospholipid hydroperoxide glutathione peroxidase (169 aa).

Residue Cys43 is part of the active site.

This sequence belongs to the glutathione peroxidase family. Monomer. Has a tendency to form higher mass oligomers. Interacts with FUNDC1; this interaction promotes GPX4 recruitment into mitochondria through TOM/TIM complex where it is degraded by mitophagy.

It is found in the cytoplasm. The enzyme catalyses a hydroperoxy polyunsaturated fatty acid + 2 glutathione = a hydroxy polyunsaturated fatty acid + glutathione disulfide + H2O. Functionally, protects cells and enzymes from oxidative damage, by catalyzing the reduction of hydrogen peroxide, lipid peroxides and organic hydroperoxide, by glutathione. This Solanum lycopersicum (Tomato) protein is Probable phospholipid hydroperoxide glutathione peroxidase (GPXle-1).